Consider the following 602-residue polypeptide: Elongation factor 4 (602 aa).

Residues 7-189 enclose the tr-type G domain; that stretch reads SKIRNFCIIA…AVVSRIPHPQ (183 aa). GTP is bound by residues 19–24 and 136–139; these read DHGKST and NKVD.

The protein belongs to the TRAFAC class translation factor GTPase superfamily. Classic translation factor GTPase family. LepA subfamily.

Its subcellular location is the cell inner membrane. It catalyses the reaction GTP + H2O = GDP + phosphate + H(+). Functionally, required for accurate and efficient protein synthesis under certain stress conditions. May act as a fidelity factor of the translation reaction, by catalyzing a one-codon backward translocation of tRNAs on improperly translocated ribosomes. Back-translocation proceeds from a post-translocation (POST) complex to a pre-translocation (PRE) complex, thus giving elongation factor G a second chance to translocate the tRNAs correctly. Binds to ribosomes in a GTP-dependent manner. This is Elongation factor 4 from Prochlorococcus marinus subsp. pastoris (strain CCMP1986 / NIES-2087 / MED4).